Consider the following 497-residue polypeptide: Galactose-1-phosphate uridylyltransferase (497 aa).

It belongs to the galactose-1-phosphate uridylyltransferase type 2 family.

Its subcellular location is the cytoplasm. It carries out the reaction alpha-D-galactose 1-phosphate + UDP-alpha-D-glucose = alpha-D-glucose 1-phosphate + UDP-alpha-D-galactose. Its pathway is carbohydrate metabolism; galactose metabolism. The sequence is that of Galactose-1-phosphate uridylyltransferase from Clostridium acetobutylicum (strain ATCC 824 / DSM 792 / JCM 1419 / IAM 19013 / LMG 5710 / NBRC 13948 / NRRL B-527 / VKM B-1787 / 2291 / W).